The primary structure comprises 109 residues: MKRIKSGDEVIVIAGKSKGHIGKVLRVVDDAVVVEGGNLIKKHIKPNPQKPENKGGIIAREAPLHVSNVAHYNPVTKKADKVGFKYLESNGVSKKVRYYKSNNEIIDRI.

It belongs to the universal ribosomal protein uL24 family. Part of the 50S ribosomal subunit.

One of two assembly initiator proteins, it binds directly to the 5'-end of the 23S rRNA, where it nucleates assembly of the 50S subunit. Its function is as follows. One of the proteins that surrounds the polypeptide exit tunnel on the outside of the subunit. The protein is Large ribosomal subunit protein uL24 of Legionella pneumophila (strain Paris).